A 388-amino-acid chain; its full sequence is Chorismate synthase (388 aa).

Arg-39 and Arg-45 together coordinate NADP(+). Residues Arg-130–Ser-132, Asn-251–Ala-252, Gly-296, Lys-311–Thr-315, and Arg-337 each bind FMN.

The protein belongs to the chorismate synthase family. Homotetramer. Requires FMNH2 as cofactor.

The catalysed reaction is 5-O-(1-carboxyvinyl)-3-phosphoshikimate = chorismate + phosphate. The protein operates within metabolic intermediate biosynthesis; chorismate biosynthesis; chorismate from D-erythrose 4-phosphate and phosphoenolpyruvate: step 7/7. Catalyzes the anti-1,4-elimination of the C-3 phosphate and the C-6 proR hydrogen from 5-enolpyruvylshikimate-3-phosphate (EPSP) to yield chorismate, which is the branch point compound that serves as the starting substrate for the three terminal pathways of aromatic amino acid biosynthesis. This reaction introduces a second double bond into the aromatic ring system. In Streptococcus pneumoniae (strain 70585), this protein is Chorismate synthase.